We begin with the raw amino-acid sequence, 285 residues long: Urease accessory protein UreD (285 aa).

Belongs to the UreD family. In terms of assembly, ureD, UreF and UreG form a complex that acts as a GTP-hydrolysis-dependent molecular chaperone, activating the urease apoprotein by helping to assemble the nickel containing metallocenter of UreC. The UreE protein probably delivers the nickel.

Its subcellular location is the cytoplasm. Required for maturation of urease via the functional incorporation of the urease nickel metallocenter. This Cytophaga hutchinsonii (strain ATCC 33406 / DSM 1761 / CIP 103989 / NBRC 15051 / NCIMB 9469 / D465) protein is Urease accessory protein UreD.